The following is a 154-amino-acid chain: Superoxide dismutase [Cu-Zn] (154 aa).

Cu cation-binding residues include His47, His49, and His64. Cys58 and Cys147 form a disulfide bridge. 4 residues coordinate Zn(2+): His64, His72, His81, and Asp84. His121 contacts Cu cation. Substrate is bound at residue Arg144.

This sequence belongs to the Cu-Zn superoxide dismutase family. As to quaternary structure, homodimer. Cu cation serves as cofactor. Requires Zn(2+) as cofactor.

Its subcellular location is the cytoplasm. The enzyme catalyses 2 superoxide + 2 H(+) = H2O2 + O2. Destroys radicals which are normally produced within the cells and which are toxic to biological systems. The sequence is that of Superoxide dismutase [Cu-Zn] (SOD1) from Candida albicans (Yeast).